Reading from the N-terminus, the 209-residue chain is Claudin-4 (209 aa).

Topologically, residues 1-9 are cytoplasmic; sequence MASMGLQVT. Positions 1–103 are interaction with EPHA2; that stretch reads MASMGLQVTG…GVLLSVVGGK (103 aa). Residues 10–30 traverse the membrane as a helical segment; the sequence is GIALAVLGWLAVMLCCALPMW. The Extracellular portion of the chain corresponds to 31–81; that stretch reads RVTAFIGSNIVTSQTIWEGLWMNCVVQSTGQMQCKVYDSLLALPQDLQAAR. Cysteines 54 and 64 form a disulfide. A helical transmembrane segment spans residues 82–102; sequence ALVIISIIVAALGVLLSVVGG. At 103–117 the chain is on the cytoplasmic side; the sequence is KCTNCLEDESAKAKT. A helical membrane pass occupies residues 118–138; sequence MIVAGVVFLLAGLLVIVPVSW. Residues 139–160 are Extracellular-facing; the sequence is TAHNIIQDFYNPLVASGQKREM. A helical membrane pass occupies residues 161–181; sequence GASLYVGWAASGLLLLGGGLL. Over 182–209 the chain is Cytoplasmic; it reads CCNCPPRTDKPYSAKYSAARSAAASNYV. Phosphotyrosine; by EPHA2 is present on Tyr208. Residues 208-209 form an interactions with TJP1, TJP2 and TJP3 region; the sequence is YV.

It belongs to the claudin family. In terms of assembly, interacts with EPHA2; phosphorylates CLDN4 and may regulate tight junctions. Directly interacts with TJP1/ZO-1, TJP2/ZO-2 and TJP3/ZO-3. Interacts with CLDN1. Interacts with CLDN8. In terms of processing, phosphorylated. Phosphorylation by EPHA2 is stimulated by EFNA1 and alters interaction with TJP1.

It is found in the cell junction. The protein resides in the tight junction. The protein localises to the cell membrane. Its function is as follows. Channel-forming tight junction protein that mediates paracellular chloride transport in the kidney. Plays a critical role in the paracellular reabsorption of filtered chloride in the kidney collecting ducts. Claudins play a major role in tight junction-specific obliteration of the intercellular space, through calcium-independent cell-adhesion activity. The chain is Claudin-4 (CLDN4) from Chlorocebus aethiops (Green monkey).